Here is an 865-residue protein sequence, read N- to C-terminus: Alanine--tRNA ligase (865 aa).

Residues His-554, His-558, Cys-656, and His-660 each contribute to the Zn(2+) site.

It belongs to the class-II aminoacyl-tRNA synthetase family. Zn(2+) serves as cofactor.

Its subcellular location is the cytoplasm. The catalysed reaction is tRNA(Ala) + L-alanine + ATP = L-alanyl-tRNA(Ala) + AMP + diphosphate. Functionally, catalyzes the attachment of alanine to tRNA(Ala) in a two-step reaction: alanine is first activated by ATP to form Ala-AMP and then transferred to the acceptor end of tRNA(Ala). Also edits incorrectly charged Ser-tRNA(Ala) and Gly-tRNA(Ala) via its editing domain. The chain is Alanine--tRNA ligase from Francisella tularensis subsp. tularensis (strain FSC 198).